A 453-amino-acid polypeptide reads, in one-letter code: UDP-glycosyltransferase 74E2 (453 aa).

The active-site Proton acceptor is H17. H17 contributes to the an anthocyanidin binding site. D109 (charge relay) is an active-site residue. UDP-alpha-D-glucose is bound by residues T131, Q334, H349, W352, N353, S354, E357, D373, and Q374.

Belongs to the UDP-glycosyltransferase family. In terms of tissue distribution, expressed in roots, cotyledons and leaf hydathodes.

It carries out the reaction (indol-3-yl)butanoate + UDP-alpha-D-glucose = 4-(indol-3-yl)butanoyl-beta-D-glucose + UDP. Its function is as follows. Glucosyltransferase that acts on the auxin indole-3-butyric acid (IBA). Mediates abiotic stress responses and stress-induced morphological adaptations by regulating auxin homeostasis. Possesses low activity in vitro on jasmonate (JA) and the synthetic auxin analog naphthaleneacetic acid (NAA). This is UDP-glycosyltransferase 74E2 (UGT74E2) from Arabidopsis thaliana (Mouse-ear cress).